Reading from the N-terminus, the 369-residue chain is DNA replication and repair protein RecF (369 aa).

30–37 (GDNAQGKT) lines the ATP pocket.

This sequence belongs to the RecF family.

It is found in the cytoplasm. Functionally, the RecF protein is involved in DNA metabolism; it is required for DNA replication and normal SOS inducibility. RecF binds preferentially to single-stranded, linear DNA. It also seems to bind ATP. The chain is DNA replication and repair protein RecF from Streptococcus equi subsp. equi (strain 4047).